We begin with the raw amino-acid sequence, 373 residues long: tRNA-specific 2-thiouridylase MnmA (373 aa).

Residues 12–19 and M38 each bind ATP; that span reads GMSGGVDS. An interaction with target base in tRNA region spans residues 98–100; it reads NPD. Catalysis depends on C103, which acts as the Nucleophile. A disulfide bond links C103 and C200. G127 lines the ATP pocket. Positions 150-152 are interaction with tRNA; the sequence is KDQ. The active-site Cysteine persulfide intermediate is the C200. Positions 312–313 are interaction with tRNA; sequence RY.

It belongs to the MnmA/TRMU family.

Its subcellular location is the cytoplasm. The enzyme catalyses S-sulfanyl-L-cysteinyl-[protein] + uridine(34) in tRNA + AH2 + ATP = 2-thiouridine(34) in tRNA + L-cysteinyl-[protein] + A + AMP + diphosphate + H(+). Its function is as follows. Catalyzes the 2-thiolation of uridine at the wobble position (U34) of tRNA, leading to the formation of s(2)U34. The polypeptide is tRNA-specific 2-thiouridylase MnmA (Streptococcus uberis (strain ATCC BAA-854 / 0140J)).